Here is a 360-residue protein sequence, read N- to C-terminus: Isopentenyl-diphosphate delta-isomerase (360 aa).

12–13 provides a ligand contact to substrate; sequence RK. FMN-binding positions include 69–71, Ser-99, and Asn-130; that span reads SMT. Residue 99-101 participates in substrate binding; sequence SQR. Gln-164 lines the substrate pocket. Residue Glu-165 coordinates Mg(2+). FMN contacts are provided by residues Lys-196, Thr-226, 277 to 279, and 298 to 299; these read GVR and AK.

The protein belongs to the IPP isomerase type 2 family. As to quaternary structure, homooctamer. Dimer of tetramers. It depends on FMN as a cofactor. NADPH is required as a cofactor. Requires Mg(2+) as cofactor.

The protein resides in the cytoplasm. It catalyses the reaction isopentenyl diphosphate = dimethylallyl diphosphate. Functionally, involved in the biosynthesis of isoprenoids. Catalyzes the 1,3-allylic rearrangement of the homoallylic substrate isopentenyl (IPP) to its allylic isomer, dimethylallyl diphosphate (DMAPP). The polypeptide is Isopentenyl-diphosphate delta-isomerase (Halobacterium salinarum (strain ATCC 700922 / JCM 11081 / NRC-1) (Halobacterium halobium)).